The following is a 249-amino-acid chain: Early E1A protein (249 aa).

The segment at Met-38–Val-46 is interaction with RB1 in competition with E2F1. The tract at residues Ser-74–Asn-131 is interaction with UBE2I. An LXCXE motif, interaction with host RB1 and TMEM173/STING motif is present at residues Leu-96–Glu-100. A zinc finger lies at Cys-145–Cys-165. A disordered region spans residues Asp-180–Pro-203. The span at Ala-181–Thr-193 shows a compositional bias: acidic residues. The PXDLS motif, CTBP-binding signature appears at Pro-238 to Ser-242. A Nuclear localization signal motif is present at residues Lys-244 to Cys-248.

This sequence belongs to the adenoviridae E1A protein family. Interacts with host UBE2I; this interaction interferes with polySUMOylation. Interacts with host RB1; this interaction induces the aberrant dissociation of RB1-E2F1 complex thereby disrupting the activity of RB1 and activating E2F1-regulated genes. Interacts with host ATF7; the interaction enhances ATF7-mediated viral transactivation activity which requires the zinc binding domains of both proteins. Isoform early E1A 32 kDa protein and isoform early E1A 26 kDa protein interact (via N-terminus) with CUL1 and E3 ubiquitin ligase RBX1; these interactions inhibit RBX1-CUL1-dependent elongation reaction of ubiquitin chains and attenuate ubiquitination of SCF(FBXW7) target proteins. Interacts (via PXLXP motif) with host ZMYND11/BS69 (via MYND-type zinc finger); this interaction inhibits E1A mediated transactivation. Interacts with host EP300; this interaction stimulates the acetylation of RB1 by recruiting EP300 and RB1 into a multimeric-protein complex. Interacts with host CTBP1 and CTBP2; this interaction seems to potentiate viral replication. Interacts with host DCAF7. Interacts with host DYRK1A. Interacts with host KPNA4; this interaction allows E1A import into the host nucleus. Interacts with host EP400; this interaction stabilizes MYC. Interacts with host TBP protein; this interaction probably disrupts the TBP-TATA complex. Interacts (via LXCXE motif) with host TMEM173/STING; this interaction impairs the ability of TMEM173/STING to sense cytosolic DNA and promote the production of type I interferon (IFN-alpha and IFN-beta). Interacts (via C-terminus) with host ZBED1/hDREF (via C-terminus); the interaction is direct.

The protein resides in the host nucleus. In terms of biological role, plays a role in viral genome replication by driving entry of quiescent cells into the cell cycle. Stimulation of progression from G1 to S phase allows the virus to efficiently use the cellular DNA replicating machinery to achieve viral genome replication. E1A protein has both transforming and trans-activating activities. Induces the disassembly of the E2F1 transcription factor from RB1 by direct competition for the same binding site on RB1, with subsequent transcriptional activation of E2F1-regulated S-phase genes and of the E2 region of the adenoviral genome. Release of E2F1 leads to the ARF-mediated inhibition of MDM2 and causes TP53/p53 to accumulate because it is not targeted for degradation by MDM2-mediated ubiquitination anymore. This increase in TP53, in turn, would arrest the cell proliferation and direct its death but this effect is counteracted by the viral protein E1B-55K. Inactivation of the ability of RB1 to arrest the cell cycle is critical for cellular transformation, uncontrolled cellular growth and proliferation induced by viral infection. Interaction with RBX1 and CUL1 inhibits ubiquitination of the proteins targeted by SCF(FBXW7) ubiquitin ligase complex, and may be linked to unregulated host cell proliferation. The tumorigenesis-restraining activity of E1A may be related to the disruption of the host CtBP-CtIP complex through the CtBP binding motif. Interaction with host TMEM173/STING impairs the ability of TMEM173/STING to sense cytosolic DNA and promote the production of type I interferon (IFN-alpha and IFN-beta). Promotes the sumoylation of host ZBED1/hDREF with SUMO1. In Homo sapiens (Human), this protein is Early E1A protein.